Consider the following 235-residue polypeptide: Small ribosomal subunit protein uS2 (235 aa).

It belongs to the universal ribosomal protein uS2 family.

This Geobacillus sp. (strain WCH70) protein is Small ribosomal subunit protein uS2.